A 148-amino-acid chain; its full sequence is 3-dehydroquinate dehydratase (148 aa).

The active-site Proton acceptor is the tyrosine 23. Substrate is bound by residues asparagine 74, histidine 80, and aspartate 87. The active-site Proton donor is the histidine 100. Residues 101–102 (IS) and arginine 111 contribute to the substrate site.

This sequence belongs to the type-II 3-dehydroquinase family. In terms of assembly, homododecamer.

The enzyme catalyses 3-dehydroquinate = 3-dehydroshikimate + H2O. It participates in metabolic intermediate biosynthesis; chorismate biosynthesis; chorismate from D-erythrose 4-phosphate and phosphoenolpyruvate: step 3/7. Catalyzes a trans-dehydration via an enolate intermediate. In Caldanaerobacter subterraneus subsp. tengcongensis (strain DSM 15242 / JCM 11007 / NBRC 100824 / MB4) (Thermoanaerobacter tengcongensis), this protein is 3-dehydroquinate dehydratase.